The chain runs to 342 residues: Holliday junction branch migration complex subunit RuvB (342 aa).

A disordered region spans residues 1 to 21; the sequence is MSVEHSPVDPSAEPPEKAEEA. Positions 1-184 are large ATPase domain (RuvB-L); it reads MSVEHSPVDP…FGFTAQLDYY (184 aa). Residues Leu23, Arg24, Gly65, Lys68, Thr69, Thr70, 131–133, Arg174, Tyr184, and Arg221 each bind ATP; that span reads EDF. Position 69 (Thr69) interacts with Mg(2+). The small ATPAse domain (RuvB-S) stretch occupies residues 185-255; that stretch reads EVADLERIVT…GAETALDLYE (71 aa). The tract at residues 258–342 is head domain (RuvB-H); the sequence is PLGLDRLDRA…PPDSSGEGLF (85 aa). Arg313 and Arg318 together coordinate DNA.

This sequence belongs to the RuvB family. Homohexamer. Forms an RuvA(8)-RuvB(12)-Holliday junction (HJ) complex. HJ DNA is sandwiched between 2 RuvA tetramers; dsDNA enters through RuvA and exits via RuvB. An RuvB hexamer assembles on each DNA strand where it exits the tetramer. Each RuvB hexamer is contacted by two RuvA subunits (via domain III) on 2 adjacent RuvB subunits; this complex drives branch migration. In the full resolvosome a probable DNA-RuvA(4)-RuvB(12)-RuvC(2) complex forms which resolves the HJ.

It is found in the cytoplasm. The enzyme catalyses ATP + H2O = ADP + phosphate + H(+). In terms of biological role, the RuvA-RuvB-RuvC complex processes Holliday junction (HJ) DNA during genetic recombination and DNA repair, while the RuvA-RuvB complex plays an important role in the rescue of blocked DNA replication forks via replication fork reversal (RFR). RuvA specifically binds to HJ cruciform DNA, conferring on it an open structure. The RuvB hexamer acts as an ATP-dependent pump, pulling dsDNA into and through the RuvAB complex. RuvB forms 2 homohexamers on either side of HJ DNA bound by 1 or 2 RuvA tetramers; 4 subunits per hexamer contact DNA at a time. Coordinated motions by a converter formed by DNA-disengaged RuvB subunits stimulates ATP hydrolysis and nucleotide exchange. Immobilization of the converter enables RuvB to convert the ATP-contained energy into a lever motion, pulling 2 nucleotides of DNA out of the RuvA tetramer per ATP hydrolyzed, thus driving DNA branch migration. The RuvB motors rotate together with the DNA substrate, which together with the progressing nucleotide cycle form the mechanistic basis for DNA recombination by continuous HJ branch migration. Branch migration allows RuvC to scan DNA until it finds its consensus sequence, where it cleaves and resolves cruciform DNA. The sequence is that of Holliday junction branch migration complex subunit RuvB from Cutibacterium acnes (strain DSM 16379 / KPA171202) (Propionibacterium acnes).